A 193-amino-acid polypeptide reads, in one-letter code: Potassium-transporting ATPase KdpC subunit (193 aa).

The helical transmembrane segment at 7–27 (PLVVLFVILTAVTGLAYPAVM) threads the bilayer.

Belongs to the KdpC family. The system is composed of three essential subunits: KdpA, KdpB and KdpC.

Its subcellular location is the cell inner membrane. Functionally, part of the high-affinity ATP-driven potassium transport (or Kdp) system, which catalyzes the hydrolysis of ATP coupled with the electrogenic transport of potassium into the cytoplasm. This subunit acts as a catalytic chaperone that increases the ATP-binding affinity of the ATP-hydrolyzing subunit KdpB by the formation of a transient KdpB/KdpC/ATP ternary complex. This is Potassium-transporting ATPase KdpC subunit from Burkholderia cenocepacia (strain ATCC BAA-245 / DSM 16553 / LMG 16656 / NCTC 13227 / J2315 / CF5610) (Burkholderia cepacia (strain J2315)).